The following is a 114-amino-acid chain: T cell receptor beta variable 5-8 (114 aa).

Residues 1–21 (MGPRLLFWALLCLLGTGPVEA) form the signal peptide. The region spanning 22-114 (GVTQSPTHLI…SALYLCASSL (93 aa)) is the Ig-like domain. Residues C42 and C110 are joined by a disulfide bond. The N-linked (GlcNAc...) asparagine glycan is linked to N90.

In terms of assembly, alpha-beta TR is a heterodimer composed of an alpha and beta chain; disulfide-linked. The alpha-beta TR is associated with the transmembrane signaling CD3 coreceptor proteins to form the TR-CD3 (TcR or TCR). The assembly of alpha-beta TR heterodimers with CD3 occurs in the endoplasmic reticulum where a single alpha-beta TR heterodimer associates with one CD3D-CD3E heterodimer, one CD3G-CD3E heterodimer and one CD247 homodimer forming a stable octameric structure. CD3D-CD3E and CD3G-CD3E heterodimers preferentially associate with TR alpha and TR beta chains, respectively. The association of the CD247 homodimer is the last step of TcR assembly in the endoplasmic reticulum and is required for transport to the cell surface.

It is found in the cell membrane. V region of the variable domain of T cell receptor (TR) beta chain that participates in the antigen recognition. Alpha-beta T cell receptors are antigen specific receptors which are essential to the immune response and are present on the cell surface of T lymphocytes. Recognize peptide-major histocompatibility (MH) (pMH) complexes that are displayed by antigen presenting cells (APC), a prerequisite for efficient T cell adaptive immunity against pathogens. Binding of alpha-beta TR to pMH complex initiates TR-CD3 clustering on the cell surface and intracellular activation of LCK that phosphorylates the ITAM motifs of CD3G, CD3D, CD3E and CD247 enabling the recruitment of ZAP70. In turn ZAP70 phosphorylates LAT, which recruits numerous signaling molecules to form the LAT signalosome. The LAT signalosome propagates signal branching to three major signaling pathways, the calcium, the mitogen-activated protein kinase (MAPK) kinase and the nuclear factor NF-kappa-B (NF-kB) pathways, leading to the mobilization of transcription factors that are critical for gene expression and essential for T cell growth and differentiation. The T cell repertoire is generated in the thymus, by V-(D)-J rearrangement. This repertoire is then shaped by intrathymic selection events to generate a peripheral T cell pool of self-MH restricted, non-autoaggressive T cells. Post-thymic interaction of alpha-beta TR with the pMH complexes shapes TR structural and functional avidity. In Homo sapiens (Human), this protein is T cell receptor beta variable 5-8.